Consider the following 213-residue polypeptide: Probable nicotinate-nucleotide adenylyltransferase (213 aa).

The protein belongs to the NadD family.

It catalyses the reaction nicotinate beta-D-ribonucleotide + ATP + H(+) = deamido-NAD(+) + diphosphate. It functions in the pathway cofactor biosynthesis; NAD(+) biosynthesis; deamido-NAD(+) from nicotinate D-ribonucleotide: step 1/1. In terms of biological role, catalyzes the reversible adenylation of nicotinate mononucleotide (NaMN) to nicotinic acid adenine dinucleotide (NaAD). In Escherichia coli O45:K1 (strain S88 / ExPEC), this protein is Probable nicotinate-nucleotide adenylyltransferase.